The primary structure comprises 159 residues: Sumo-conjugating enzyme ubc9 (159 aa).

One can recognise a UBC core domain in the interval 4 to 157; that stretch reads ISSARLSEER…VKAQSKVYPP (154 aa). The Glycyl thioester intermediate role is filled by Cys-93.

The protein belongs to the ubiquitin-conjugating enzyme family.

It localises to the nucleus. It functions in the pathway protein modification; protein sumoylation. In terms of biological role, accepts the ubiquitin-like protein sumo from the E1 complex and catalyzes its covalent attachment to other proteins with the help of an E3 ligase. The polypeptide is Sumo-conjugating enzyme ubc9 (ubc9) (Dictyostelium discoideum (Social amoeba)).